The chain runs to 308 residues: Transaldolase (308 aa).

Lys-125 (schiff-base intermediate with substrate) is an active-site residue.

The protein belongs to the transaldolase family. Type 1 subfamily. In terms of assembly, homodimer.

The protein localises to the cytoplasm. It carries out the reaction D-sedoheptulose 7-phosphate + D-glyceraldehyde 3-phosphate = D-erythrose 4-phosphate + beta-D-fructose 6-phosphate. The protein operates within carbohydrate degradation; pentose phosphate pathway; D-glyceraldehyde 3-phosphate and beta-D-fructose 6-phosphate from D-ribose 5-phosphate and D-xylulose 5-phosphate (non-oxidative stage): step 2/3. Transaldolase is important for the balance of metabolites in the pentose-phosphate pathway. This is Transaldolase from Stutzerimonas stutzeri (strain A1501) (Pseudomonas stutzeri).